A 90-amino-acid chain; its full sequence is uncharacterized protein (90 aa).

This is an uncharacterized protein from Mycobacterium tuberculosis (strain ATCC 25618 / H37Rv).